The chain runs to 115 residues: Nucleoid-associated protein PMN2A_1347 (115 aa).

The tract at residues 89 to 115 is disordered; the sequence is STSTMKERMEDLTGGFKLNLPGMGEEN.

The protein belongs to the YbaB/EbfC family. As to quaternary structure, homodimer.

Its subcellular location is the cytoplasm. It is found in the nucleoid. Functionally, binds to DNA and alters its conformation. May be involved in regulation of gene expression, nucleoid organization and DNA protection. The polypeptide is Nucleoid-associated protein PMN2A_1347 (Prochlorococcus marinus (strain NATL2A)).